Here is a 248-residue protein sequence, read N- to C-terminus: Pyridoxine 5'-phosphate synthase (248 aa).

3-amino-2-oxopropyl phosphate is bound at residue Asn-10. 1-deoxy-D-xylulose 5-phosphate is bound at residue 12-13; sequence DH. Arg-21 contributes to the 3-amino-2-oxopropyl phosphate binding site. His-46 acts as the Proton acceptor in catalysis. Residues Arg-48 and His-53 each contribute to the 1-deoxy-D-xylulose 5-phosphate site. The active-site Proton acceptor is Glu-73. Thr-103 contributes to the 1-deoxy-D-xylulose 5-phosphate binding site. His-194 functions as the Proton donor in the catalytic mechanism. 3-amino-2-oxopropyl phosphate is bound by residues Gly-195 and 216–217; that span reads GH.

This sequence belongs to the PNP synthase family. As to quaternary structure, homooctamer; tetramer of dimers.

Its subcellular location is the cytoplasm. It catalyses the reaction 3-amino-2-oxopropyl phosphate + 1-deoxy-D-xylulose 5-phosphate = pyridoxine 5'-phosphate + phosphate + 2 H2O + H(+). Its pathway is cofactor biosynthesis; pyridoxine 5'-phosphate biosynthesis; pyridoxine 5'-phosphate from D-erythrose 4-phosphate: step 5/5. In terms of biological role, catalyzes the complicated ring closure reaction between the two acyclic compounds 1-deoxy-D-xylulose-5-phosphate (DXP) and 3-amino-2-oxopropyl phosphate (1-amino-acetone-3-phosphate or AAP) to form pyridoxine 5'-phosphate (PNP) and inorganic phosphate. The polypeptide is Pyridoxine 5'-phosphate synthase (Legionella pneumophila (strain Lens)).